A 99-amino-acid chain; its full sequence is Protein S100-Z (99 aa).

EF-hand domains follow at residues 13-48 (ITVFHNYSGSEGDKYKLSKGELKELLNAELTDFLMS) and 50-85 (KDPMLVEKIMNDLDSNKDNEVDFNEFVVLVAALTVA). 10 residues coordinate Ca(2+): Ser20, Glu23, Asp25, Lys28, Glu33, Asp63, Asn65, Asp67, Glu69, and Glu74.

It belongs to the S-100 family. In terms of assembly, homodimer. Homodimers may assemble into larger stable oligomers. In terms of tissue distribution, in larva at 5 days post-fertilization, shows very restricted expression only in a few large cells of the olfactory placode. More widely expressed in the adult. Expressed at higher levels in gut than in spleen, head kidney and gill.

The chain is Protein S100-Z from Danio rerio (Zebrafish).